Reading from the N-terminus, the 74-residue chain is Consomatin Ma1 (74 aa).

The first 22 residues, 1-22, serve as a signal peptide directing secretion; that stretch reads MQTAYWVMVMMMVWITAPLSEG. A propeptide spanning residues 23 to 57 is cleaved from the precursor; it reads GKLNGEIRGLVSHILIPQHTLRSLTSRDRSDNGGS. The cysteines at positions 63 and 68 are disulfide-linked. The residue at position 65 (W65) is a D-tryptophan. A 4-hydroxyproline mark is found at P69, P70, and P72.

This sequence belongs to the conotoxin C superfamily. Consomatin family. In terms of tissue distribution, expressed by the venom duct.

The protein resides in the secreted. Its function is as follows. Moderately activates human somatostatin receptors (SSTR) with a preferential activation of SSTR1 and SSTR4. In vivo, does not cause behavioral changes in mice within a few minutes of intracranial injection, but causes a progressive loss of movement thereafter. Four to five hours after injection, mice recover, even with the highest dose tested. Shows antinociception and antihyperalgesia activities in two mouse models of acute pain, most probably by acting outside the central nervous system. This is Consomatin Ma1 from Conus magus (Magical cone).